A 353-amino-acid polypeptide reads, in one-letter code: 2-oxoglutarate-dependent dioxygenase phqC (353 aa).

The region spanning 199-315 is the Fe2OG dioxygenase domain; sequence CASELRLNNY…RRSCAFFLKA (117 aa). Fe cation-binding residues include His227, Asp229, and His287. Residue Arg302 participates in 2-oxoglutarate binding.

Belongs to the iron/ascorbate-dependent oxidoreductase family. Fe(2+) is required as a cofactor.

It participates in alkaloid biosynthesis. In terms of biological role, 2-oxoglutarate-dependent dioxygenase; part of the gene cluster that mediates the biosynthesis of paraherquamide, a fungal indole alkaloid that belongs to a family of natural products containing a characteristic bicyclo[2.2.2]diazaoctane core. The first steps in the biosynthesis of paraherquamide is the production of the beta-methyl-proline precursor from L-isoleucine. They require oxidation of a terminally hydroxylated L-isoleucine to the corresponding aldehyde by enzymes which have still to be identified. Spontaneous cyclization and dehydration would yield the 4-methyl pyrolline-5-carboxylic acid, which is then reduced by the pyrroline-5-carboxylate reductase phqD leading to the beta-methyl-proline precursor. The next step of paraherquamide biosynthesis involves coupling of beta-methyl-proline and L-tryptophan by the bimodular NRPS phqB, to produce a monooxopiperazine intermediate. The reductase (R) domain of phqB utilizes NADPH for hydride transfer to reduce the thioester bond of the T domain-tethered linear dipeptide to a hemithioaminal intermediate, which spontaneously cleaves the C-S bond to release the aldehyde product. This compound undergoes spontaneous cyclization and dehydration to give a dienamine which is reverse prenylated at C-2 by the reverse prenyltransferase phqJ. The other prenyltransferase present in the cluster, phqI may be a redundant gene in the pathway. During biosynthetic assembly, the key step to produce the polycyclic core is catalyzed by the bifunctional reductase and intramolecular [4+2] Diels-Alderase, phqE, resulting in formation of the [2.2.2] diazaoctane intermediate preparaherquamide. Following formation of preparaherquamide, an indole 2,3-epoxidation-initiated pinacol-like rearrangement is catalyzed by the phqK FAD-dependent monooxygenase. The prenyltransferase phqA, the cytochrome P450 monooxygenase phqL, and the FAD-linked oxidoreductase phqH (or the cytochrome P450 monooxygenase phqM), are proposed to be involved in the formation of the pyran ring. The FAD-dependent monooxygenase phqK is likely responsible for generation of the spiro-oxindole, and the N-methylation is likely mediated by the phqN methyltransferase leading to the isolable natural product paraherquamide F. However, the order of these biosynthetic steps has still to be determined. In late-stage paraherquamide biosynthesis, the third P450 monooxygenase, phqO, is probably responsible for the C-14 hydroxylation, transforming paraherquamide F to paraherquamide G, and paraherquamide E to the final product paraherquamide A. The expansion from the 6-membered ring pyran (in paraherquamides F and G) to the 7-membered dioxepin ring (in paraherquamides A and E) represents a poorly understood but intriguing process that probably involves the 2-oxoglutarate-dependent dioxygenase phqC. Finally, the remaining members of the paraherquamide cluster, including phqI as well as phqM (or phqH), do not have a clearly prescribed role and appear to be redundant. This is 2-oxoglutarate-dependent dioxygenase phqC from Penicillium fellutanum.